Reading from the N-terminus, the 626-residue chain is Chaperone protein HtpG (626 aa).

Residues 1–329 are a; substrate-binding; the sequence is MSEETLSFQA…SSDLPLNVSR (329 aa). The tract at residues 330–549 is b; the sequence is EMLQDDPRLR…EGAMSLHLQK (220 aa). The c stretch occupies residues 550-626; it reads LLRQANQGSE…LTEVMGKGLI (77 aa).

It belongs to the heat shock protein 90 family. As to quaternary structure, homodimer.

It localises to the cytoplasm. Functionally, molecular chaperone. Has ATPase activity. In Rhodospirillum rubrum (strain ATCC 11170 / ATH 1.1.1 / DSM 467 / LMG 4362 / NCIMB 8255 / S1), this protein is Chaperone protein HtpG.